A 79-amino-acid chain; its full sequence is Probable [Fe-S]-dependent transcriptional repressor (79 aa).

Cys56, Cys61, Cys64, and Cys71 together coordinate iron-sulfur cluster.

Belongs to the FeoC family.

May function as a transcriptional regulator that controls feoABC expression. In Klebsiella pneumoniae (strain 342), this protein is Probable [Fe-S]-dependent transcriptional repressor.